The primary structure comprises 309 residues: Ribonuclease Z (309 aa).

The Zn(2+) site is built by H63, H65, D67, H68, H145, D216, and H274. Catalysis depends on D67, which acts as the Proton acceptor.

This sequence belongs to the RNase Z family. As to quaternary structure, homodimer. The cofactor is Zn(2+).

It catalyses the reaction Endonucleolytic cleavage of RNA, removing extra 3' nucleotides from tRNA precursor, generating 3' termini of tRNAs. A 3'-hydroxy group is left at the tRNA terminus and a 5'-phosphoryl group is left at the trailer molecule.. Functionally, zinc phosphodiesterase, which displays some tRNA 3'-processing endonuclease activity. Probably involved in tRNA maturation, by removing a 3'-trailer from precursor tRNA. This is Ribonuclease Z from Streptococcus agalactiae serotype V (strain ATCC BAA-611 / 2603 V/R).